The following is a 347-amino-acid chain: MLTNPSQVIIRNQDSLSQHKVLVLNHEADLLPKALLDVAASVDALALDYHHYLHLAPHANSKLRCYFGHDLPHQDPLEREKYDTVIVYFPKAKPLAPYLFNLAANHLVPNGQLLVVGENKGGIKSLVKLLPEYFATGMKLDNARHCLLFGSSLEGSAPAMKLSDWVSQYQLSTPQGEISICNLVGVFSEKRLDLGTELLLSHLPTLSGRVLDFGCGAGVIAAALLKAQPSLSLECVDINAMALASCELTLAANGMTAKVYPSDGLAQTTGKFNGIISNPPFHDGLASTTSIAQNFVTDSAKQLQHNGIWQIVANRHLPYSDIIAAEFGQLKVVADNNKYKLYYFQHK.

This sequence belongs to the methyltransferase superfamily. RsmC family. In terms of assembly, monomer.

The protein resides in the cytoplasm. The enzyme catalyses guanosine(1207) in 16S rRNA + S-adenosyl-L-methionine = N(2)-methylguanosine(1207) in 16S rRNA + S-adenosyl-L-homocysteine + H(+). Functionally, specifically methylates the guanine in position 1207 of 16S rRNA in the 30S particle. The polypeptide is Ribosomal RNA small subunit methyltransferase C (Shewanella baltica (strain OS195)).